A 206-amino-acid polypeptide reads, in one-letter code: MTANELTTGDFTDADEPFSLFGTWLKDAEKNEVNDPNAVALATVDPDGLPNVRMVLLKGFDEHGFVFYTNFESQKGQELLSTRKAAMCFHWKSLRRQVRLRGPVEIVTAEEADEYFRSRPRGSRIGAWASKQSRPLESRFALEKAVAEFTARHAIGEIPRPEYWSGFRIRPTSIEFWHDRPFRLHDRVEFRRPVPEGGWEKVRMYP.

FMN is bound by residues 53–58 (RMVLLK), 68–69 (YT), Lys-75, and Gln-97. A substrate-binding site is contributed by Lys-58. The substrate site is built by Tyr-115, Arg-119, and Ser-123. FMN contacts are provided by residues 132-133 (QS) and Trp-177. Residue 183–185 (RLH) coordinates substrate. Arg-187 provides a ligand contact to FMN.

It belongs to the pyridoxamine 5'-phosphate oxidase family. Homodimer. The cofactor is FMN.

The enzyme catalyses pyridoxamine 5'-phosphate + O2 + H2O = pyridoxal 5'-phosphate + H2O2 + NH4(+). The catalysed reaction is pyridoxine 5'-phosphate + O2 = pyridoxal 5'-phosphate + H2O2. The protein operates within cofactor metabolism; pyridoxal 5'-phosphate salvage; pyridoxal 5'-phosphate from pyridoxamine 5'-phosphate: step 1/1. Its pathway is cofactor metabolism; pyridoxal 5'-phosphate salvage; pyridoxal 5'-phosphate from pyridoxine 5'-phosphate: step 1/1. Functionally, catalyzes the oxidation of either pyridoxine 5'-phosphate (PNP) or pyridoxamine 5'-phosphate (PMP) into pyridoxal 5'-phosphate (PLP). In Sinorhizobium fredii (strain NBRC 101917 / NGR234), this protein is Pyridoxine/pyridoxamine 5'-phosphate oxidase.